Here is a 143-residue protein sequence, read N- to C-terminus: Endoribonuclease YbeY (143 aa).

Zn(2+) contacts are provided by histidine 113, histidine 117, and aspartate 123.

The protein belongs to the endoribonuclease YbeY family. The cofactor is Zn(2+).

The protein localises to the cytoplasm. Functionally, single strand-specific metallo-endoribonuclease involved in late-stage 70S ribosome quality control and in maturation of the 3' terminus of the 16S rRNA. This Elusimicrobium minutum (strain Pei191) protein is Endoribonuclease YbeY.